The primary structure comprises 502 residues: 1-aminocyclopropane-1-carboxylate synthase-like protein 1 (502 aa).

The disordered stretch occupies residues 1–24 (MFCLPQQESTAPTTCTGSASTQDM). Glu106 contributes to the substrate binding site. Lys324 is modified (N6-(pyridoxal phosphate)lysine).

This sequence belongs to the class-I pyridoxal-phosphate-dependent aminotransferase family.

In terms of biological role, does not catalyze the synthesis of 1-aminocyclopropane-1-carboxylate but is capable of catalyzing the deamination of L-vinylglycine. The protein is 1-aminocyclopropane-1-carboxylate synthase-like protein 1 (Accs) of Mus musculus (Mouse).